The chain runs to 61 residues: Defensin-like peptide TXKs2 (61 aa).

The signal sequence occupies residues methionine 1–serine 19. The propeptide occupies asparagine 20–valine 22. 3 disulfides stabilise this stretch: cysteine 26/cysteine 47, cysteine 33/cysteine 56, and cysteine 37/cysteine 58.

Belongs to the invertebrate defensin family. As to expression, expressed by the venom gland.

The protein resides in the secreted. Functionally, antibacterial protein. The polypeptide is Defensin-like peptide TXKs2 (Olivierus martensii (Manchurian scorpion)).